A 242-amino-acid polypeptide reads, in one-letter code: Probable transcriptional regulatory protein EUBREC_1961 (242 aa).

Belongs to the TACO1 family.

The protein localises to the cytoplasm. In Agathobacter rectalis (strain ATCC 33656 / DSM 3377 / JCM 17463 / KCTC 5835 / VPI 0990) (Eubacterium rectale), this protein is Probable transcriptional regulatory protein EUBREC_1961.